Reading from the N-terminus, the 221-residue chain is GTP cyclohydrolase 1 (221 aa).

Residues cysteine 109, histidine 112, and cysteine 180 each contribute to the Zn(2+) site.

The protein belongs to the GTP cyclohydrolase I family. As to quaternary structure, toroid-shaped homodecamer, composed of two pentamers of five dimers.

The catalysed reaction is GTP + H2O = 7,8-dihydroneopterin 3'-triphosphate + formate + H(+). It functions in the pathway cofactor biosynthesis; 7,8-dihydroneopterin triphosphate biosynthesis; 7,8-dihydroneopterin triphosphate from GTP: step 1/1. The sequence is that of GTP cyclohydrolase 1 from Sodalis glossinidius (strain morsitans).